We begin with the raw amino-acid sequence, 333 residues long: Ferrochelatase (333 aa).

2 residues coordinate Fe cation: His-202 and Glu-284.

The protein belongs to the ferrochelatase family.

The protein localises to the cytoplasm. It carries out the reaction heme b + 2 H(+) = protoporphyrin IX + Fe(2+). Its pathway is porphyrin-containing compound metabolism; protoheme biosynthesis; protoheme from protoporphyrin-IX: step 1/1. Catalyzes the ferrous insertion into protoporphyrin IX. The sequence is that of Ferrochelatase from Francisella tularensis subsp. tularensis (strain FSC 198).